We begin with the raw amino-acid sequence, 239 residues long: Bradykinin-potentiating and C-type natriuretic peptides (239 aa).

The N-terminal stretch at 1–23 is a signal peptide; the sequence is MFVSRLAASGLLLLALLAVSLDG. Propeptides lie at residues 24–33 and 43–49; these read KPVQQWSHKG and LVVQQWS. A Pyrrolidone carboxylic acid modification is found at Q50. Positions 62–64 are excised as a propeptide; sequence VVV. At Q65 the chain carries Pyrrolidone carboxylic acid. The propeptide occupies 76-82; sequence LVVQQWS. Q83 is modified (pyrrolidone carboxylic acid). A propeptide spanning residues 95 to 97 is cleaved from the precursor; sequence LVV. Q98 bears the Pyrrolidone carboxylic acid mark. 2 propeptides span residues 109 to 136 and 148 to 217; these read LLKPHESPAGGTTALREELSLGPEAALD and GSKA…LAKK. Positions 132-205 are disordered; that stretch reads EAALDTPPAG…HHAVGGGGGG (74 aa). A compositionally biased stretch (low complexity) spans 161–171; the sequence is SKGASATSAAS. Residues 173 to 183 show a composition bias toward basic and acidic residues; that stretch reads PMRDLRTDGKQ. An intrachain disulfide couples C223 to C239.

It in the N-terminal section; belongs to the bradykinin-potentiating peptide family. The protein in the central section; belongs to the bradykinin inhibitor peptide family. This sequence in the C-terminal section; belongs to the natriuretic peptide family. Expressed by the venom gland.

It localises to the secreted. In terms of biological role, bradykinin-potentiating peptides both inhibit the activity of the angiotensin-converting enzyme (ACE) and enhances the action of bradykinin by inhibiting the peptidases that inactivate it. They act as indirect hypotensive agent. Its function is as follows. inhibits angiotensin-converting enzyme (ACE) activity (IC(50)=4.25 uM), preventing the release of angiotensin and thus indirectly contributing to hypotension. In vivo, induce hypotensive response in both normotensive and hypertensive rats. Antagonizes the vasodilatory actions of bradykinin at the B2 bradykinin receptor (BDKRB2). Functionally, has a vasorelaxant activity in rat aortic strips and a diuretic potency in anesthetized rats. May act by activating natriuretic receptors (NPR1 and/or NPR2). The polypeptide is Bradykinin-potentiating and C-type natriuretic peptides (Lachesis muta muta (Bushmaster)).